We begin with the raw amino-acid sequence, 842 residues long: TATA box-binding protein-associated factor, RNA polymerase I, subunit C (842 aa).

Disordered stretches follow at residues 574-605 (SSLR…PSWT), 667-690 (RPGD…QQDE), and 702-842 (QAAA…RMGF). A compositionally biased stretch (basic and acidic residues) spans 577 to 588 (REPDHPAPERPA). The segment covering 745 to 760 (DASSAPHSQDLSNSEA) has biased composition (polar residues). The segment covering 783 to 794 (QHERRQTLRDYM) has biased composition (basic and acidic residues). T808 bears the Phosphothreonine mark. Over residues 809 to 826 (PPSQTSSRQTRSFRQQTP) the composition is skewed to low complexity. Residues 833-842 (PPRKKPRMGF) show a composition bias toward basic residues.

In terms of assembly, component of the transcription factor SL1/TIF-IB complex, composed of TBP and at least TAF1A, TAF1B, TAF1C and TAF1D. In the complex interacts directly with TBP, TAF1A and TAF1B. Interaction of the SL1/TIF-IB subunits with TBP excludes interaction of TBP with the transcription factor IID (TFIID) subunits. Interacts with MYC and RRN3. Interacts with p53/TP53; the interaction prevents the association of SL1/TIF-IB with UBTF and represses RNA polymerase I transcription. Part of Pol I pre-initiation complex (PIC), in which Pol I core assembles with RRN3 and promoter-bound UTBF and SL1/TIF-IB complex.

The protein localises to the nucleus. It localises to the nucleolus. In terms of biological role, component of the transcription factor SL1/TIF-IB complex, which is involved in the assembly of the PIC (pre-initiation complex) during RNA polymerase I-dependent transcription. The rate of PIC formation probably is primarily dependent on the rate of association of SL1/TIF-IB with the rDNA promoter. SL1/TIF-IB is involved in stabilization of nucleolar transcription factor 1/UBTF on rDNA. Formation of SL1/TIF-IB excludes the association of TBP with TFIID subunits. Recruits RNA polymerase I to the rRNA gene promoter via interaction with RRN3. This chain is TATA box-binding protein-associated factor, RNA polymerase I, subunit C (Taf1c), found in Rattus norvegicus (Rat).